A 130-amino-acid chain; its full sequence is Small ribosomal subunit protein uS8 (130 aa).

Belongs to the universal ribosomal protein uS8 family. Part of the 30S ribosomal subunit. Contacts proteins S5 and S12.

Its function is as follows. One of the primary rRNA binding proteins, it binds directly to 16S rRNA central domain where it helps coordinate assembly of the platform of the 30S subunit. The protein is Small ribosomal subunit protein uS8 of Klebsiella pneumoniae (strain 342).